Here is a 542-residue protein sequence, read N- to C-terminus: Putative CTP synthase (542 aa).

The tract at residues 1-277 is amidoligase domain; the sequence is MEIDLMKHIQ…HKTILDFFSL (277 aa). Ser23 is a binding site for CTP. Position 23 (Ser23) interacts with UTP. ATP contacts are provided by residues 24–29 and Asp81; that span reads SLGKGV. Mg(2+) contacts are provided by Asp81 and Glu151. CTP is bound by residues 158 to 160, 198 to 203, and Lys234; these read DIE and KTKPTQ. UTP-binding positions include 198–203 and Lys234; that span reads KTKPTQ. The Glutamine amidotransferase type-1 domain maps to 310-542; that stretch reads YVELPDAYKS…LKMSLKIKES (233 aa). Residue Glu517 is part of the active site.

This sequence belongs to the CTP synthase family. As to quaternary structure, homotetramer.

The catalysed reaction is UTP + L-glutamine + ATP + H2O = CTP + L-glutamate + ADP + phosphate + 2 H(+). It carries out the reaction L-glutamine + H2O = L-glutamate + NH4(+). The enzyme catalyses UTP + NH4(+) + ATP = CTP + ADP + phosphate + 2 H(+). It functions in the pathway pyrimidine metabolism; CTP biosynthesis via de novo pathway; CTP from UDP: step 2/2. Allosterically activated by GTP, when glutamine is the substrate; GTP has no effect on the reaction when ammonia is the substrate. The allosteric effector GTP functions by stabilizing the protein conformation that binds the tetrahedral intermediate(s) formed during glutamine hydrolysis. Inhibited by the product CTP, via allosteric rather than competitive inhibition. In terms of biological role, catalyzes the ATP-dependent amination of UTP to CTP with either L-glutamine or ammonia as the source of nitrogen. Regulates intracellular CTP levels through interactions with the four ribonucleotide triphosphates. This chain is Putative CTP synthase, found in Ureaplasma parvum serovar 3 (strain ATCC 700970).